The chain runs to 526 residues: Estrogen receptor beta (526 aa).

Residues 1–145 (MDIKNSPSNL…SPSSKRDAHF (145 aa)) are modulating. Phosphoserine; by MAPK occurs at positions 84 and 102. NR C4-type zinc fingers lie at residues 146–166 (CAVCSDYASGYHYGVWSCEGC) and 182–206 (CPATNQCTIDKNRRKSCQACRLRKC). Residues 146 to 211 (CAVCSDYASG…RLRKCYEVGM (66 aa)) constitute a DNA-binding region (nuclear receptor). Residues 261–494 (SPEQLVLTLL…DLLLEMLNAH (234 aa)) form the NR LBD domain. The interval 502–526 (LVTGSERSRMEESESKEGSQKPQAQ) is disordered. Positions 507-520 (ERSRMEESESKEGS) are enriched in basic and acidic residues.

The protein belongs to the nuclear hormone receptor family. NR3 subfamily. As to quaternary structure, binds DNA as a homodimer. Can form a heterodimer with ESR1. Interacts with NCOA1, NCOA3, NCOA5 and NCOA6 coactivators, leading to a strong increase of transcription of target genes. Interacts with UBE1C and AKAP13. Interacts with DNTTIP2. Interacts with CCDC62 in the presence of estradiol/E2; this interaction seems to enhance the transcription of target genes. Interacts with DNAAF4. Interacts with PRMT2. Interacts with CCAR2 (via N-terminus) in a ligand-independent manner. Interacts with RBM39, in the presence of estradiol (E2). Interacts with STUB1/CHIP. Phosphorylation at Ser-84 and Ser-102 recruits NCOA1.

It is found in the nucleus. Functionally, nuclear hormone receptor. Binds estrogens with an affinity similar to that of ESR1/ER-alpha, and activates expression of reporter genes containing estrogen response elements (ERE) in an estrogen-dependent manner. This Sus scrofa (Pig) protein is Estrogen receptor beta (ESR2).